We begin with the raw amino-acid sequence, 484 residues long: Cysteine desulfurase, mitochondrial (484 aa).

The segment covering 29–42 (LATSASTSSSTTTS) has biased composition (low complexity). The segment at 29-69 (LATSASTSSSTTTSNAETGELHVSTPLDSPSVHPPDGSSIS) is disordered. Residues 153 to 154 (AT), asparagine 233, glutamine 261, and 281 to 283 (SSH) each bind pyridoxal 5'-phosphate. Lysine 284 carries the N6-(pyridoxal phosphate)lysine modification. Threonine 321 contacts pyridoxal 5'-phosphate. Cysteine 408 serves as the catalytic Cysteine persulfide intermediate. Cysteine 408 is a [2Fe-2S] cluster binding site.

Belongs to the class-V pyridoxal-phosphate-dependent aminotransferase family. NifS/IscS subfamily. It depends on pyridoxal 5'-phosphate as a cofactor.

It localises to the mitochondrion. It carries out the reaction (sulfur carrier)-H + L-cysteine = (sulfur carrier)-SH + L-alanine. Functionally, catalyzes the removal of elemental sulfur from cysteine to produce alanine. It supplies the inorganic sulfur for iron-sulfur (Fe-S) clusters. Plays a role in both tRNA-processing and mitochondrial metabolism. Involved in the 2-thio-modification of both 5-carboxymethylaminomethyl-2-thiouridine in mitochondrial tRNAs and 5-methoxycarbonylmethyl-2-thiouridine (mcm5s2U) in cytoplasmic tRNAs. The chain is Cysteine desulfurase, mitochondrial from Candida maltosa (Yeast).